The chain runs to 125 residues: Glycine cleavage system H protein (125 aa).

A Lipoyl-binding domain is found at 22-104 (SYVIGITDFA…YDTGWILKLE (83 aa)). N6-lipoyllysine is present on lysine 63.

Belongs to the GcvH family. The glycine cleavage system is composed of four proteins: P, T, L and H. It depends on (R)-lipoate as a cofactor.

Its function is as follows. The glycine cleavage system catalyzes the degradation of glycine. The H protein shuttles the methylamine group of glycine from the P protein to the T protein. Functionally, is also involved in protein lipoylation via its role as an octanoyl/lipoyl carrier protein intermediate. The chain is Glycine cleavage system H protein from Listeria monocytogenes serotype 4a (strain HCC23).